A 168-amino-acid chain; its full sequence is Gremlin-2 (168 aa).

Residues 1-21 (MFWKLSLSLFLVAVLVKVAEA) form the signal peptide. The N-linked (GlcNAc...) asparagine glycan is linked to Asn-40. Cystine bridges form between Cys-73/Cys-123, Cys-87/Cys-137, Cys-97/Cys-155, and Cys-101/Cys-157. The 91-residue stretch at 73-163 (CKTQPLRQTV…QCRCMSVNLS (91 aa)) folds into the CTCK domain. Asn-161 carries an N-linked (GlcNAc...) asparagine glycan.

It belongs to the DAN family. Homodimer. Interacts with BMP2, BMP4 and BMP7, but has lower affinity for BMP7 than for BMP2 and BMP4. Binds heparin; this impairs the interaction with BMP2. Post-translationally, N-glycosylated.

The protein localises to the secreted. In terms of biological role, cytokine that inhibits the activity of BMP2 and BMP4 in a dose-dependent manner, and thereby modulates signaling by BMP family members. Contributes to the regulation of embryonic morphogenesis via BMP family members. Antagonizes BMP4-induced suppression of progesterone production in granulosa cells. The protein is Gremlin-2 (GREM2) of Homo sapiens (Human).